The following is a 274-amino-acid chain: tRNA (guanine-N(1)-)-methyltransferase (274 aa).

Residues Gly116 and 140-145 (LGDYVL) contribute to the S-adenosyl-L-methionine site.

The protein belongs to the RNA methyltransferase TrmD family. In terms of assembly, homodimer.

Its subcellular location is the cytoplasm. The enzyme catalyses guanosine(37) in tRNA + S-adenosyl-L-methionine = N(1)-methylguanosine(37) in tRNA + S-adenosyl-L-homocysteine + H(+). Its function is as follows. Specifically methylates guanosine-37 in various tRNAs. This chain is tRNA (guanine-N(1)-)-methyltransferase, found in Arthrobacter sp. (strain FB24).